Here is a 445-residue protein sequence, read N- to C-terminus: Exodeoxyribonuclease 7 large subunit (445 aa).

It belongs to the XseA family. In terms of assembly, heterooligomer composed of large and small subunits.

The protein resides in the cytoplasm. The enzyme catalyses Exonucleolytic cleavage in either 5'- to 3'- or 3'- to 5'-direction to yield nucleoside 5'-phosphates.. Functionally, bidirectionally degrades single-stranded DNA into large acid-insoluble oligonucleotides, which are then degraded further into small acid-soluble oligonucleotides. The sequence is that of Exodeoxyribonuclease 7 large subunit from Staphylococcus aureus (strain USA300 / TCH1516).